The primary structure comprises 433 residues: Serine--tRNA ligase (433 aa).

235–237 (TSE) contributes to the L-serine binding site. 266–268 (RSE) is a binding site for ATP. E289 is an L-serine binding site. 353–356 (EISS) contributes to the ATP binding site. S388 contacts L-serine.

This sequence belongs to the class-II aminoacyl-tRNA synthetase family. Type-1 seryl-tRNA synthetase subfamily. Homodimer. The tRNA molecule binds across the dimer.

The protein localises to the cytoplasm. It catalyses the reaction tRNA(Ser) + L-serine + ATP = L-seryl-tRNA(Ser) + AMP + diphosphate + H(+). It carries out the reaction tRNA(Sec) + L-serine + ATP = L-seryl-tRNA(Sec) + AMP + diphosphate + H(+). It functions in the pathway aminoacyl-tRNA biosynthesis; selenocysteinyl-tRNA(Sec) biosynthesis; L-seryl-tRNA(Sec) from L-serine and tRNA(Sec): step 1/1. Catalyzes the attachment of serine to tRNA(Ser). Is also able to aminoacylate tRNA(Sec) with serine, to form the misacylated tRNA L-seryl-tRNA(Sec), which will be further converted into selenocysteinyl-tRNA(Sec). The chain is Serine--tRNA ligase from Burkholderia ambifaria (strain MC40-6).